The sequence spans 401 residues: CCA-adding enzyme (401 aa).

Residues Gly-32 and Arg-35 each contribute to the ATP site. Gly-32 and Arg-35 together coordinate CTP. The Mg(2+) site is built by Asp-45 and Asp-47. 5 residues coordinate ATP: Arg-116, Asp-159, Arg-162, Arg-165, and Arg-168. 5 residues coordinate CTP: Arg-116, Asp-159, Arg-162, Arg-165, and Arg-168.

This sequence belongs to the tRNA nucleotidyltransferase/poly(A) polymerase family. Bacterial CCA-adding enzyme type 3 subfamily. In terms of assembly, homodimer. It depends on Mg(2+) as a cofactor.

It catalyses the reaction a tRNA precursor + 2 CTP + ATP = a tRNA with a 3' CCA end + 3 diphosphate. It carries out the reaction a tRNA with a 3' CCA end + 2 CTP + ATP = a tRNA with a 3' CCACCA end + 3 diphosphate. In terms of biological role, catalyzes the addition and repair of the essential 3'-terminal CCA sequence in tRNAs without using a nucleic acid template. Adds these three nucleotides in the order of C, C, and A to the tRNA nucleotide-73, using CTP and ATP as substrates and producing inorganic pyrophosphate. tRNA 3'-terminal CCA addition is required both for tRNA processing and repair. Also involved in tRNA surveillance by mediating tandem CCA addition to generate a CCACCA at the 3' terminus of unstable tRNAs. While stable tRNAs receive only 3'-terminal CCA, unstable tRNAs are marked with CCACCA and rapidly degraded. The protein is CCA-adding enzyme of Streptococcus mutans serotype c (strain ATCC 700610 / UA159).